Consider the following 366-residue polypeptide: 3-dehydroquinate synthase (366 aa).

Residues 69-74 (DGEAFK), 103-107 (GVIGD), 127-128 (TT), Lys140, and Lys149 each bind NAD(+). Residues Glu182, His245, and His262 each contribute to the Zn(2+) site.

It belongs to the sugar phosphate cyclases superfamily. Dehydroquinate synthase family. Co(2+) is required as a cofactor. The cofactor is Zn(2+). Requires NAD(+) as cofactor.

The protein resides in the cytoplasm. It catalyses the reaction 7-phospho-2-dehydro-3-deoxy-D-arabino-heptonate = 3-dehydroquinate + phosphate. Its pathway is metabolic intermediate biosynthesis; chorismate biosynthesis; chorismate from D-erythrose 4-phosphate and phosphoenolpyruvate: step 2/7. Catalyzes the conversion of 3-deoxy-D-arabino-heptulosonate 7-phosphate (DAHP) to dehydroquinate (DHQ). The polypeptide is 3-dehydroquinate synthase (Pseudomonas fluorescens (strain Pf0-1)).